The sequence spans 1373 residues: Capping protein, Arp2/3 and myosin-I linker protein 3 (1373 aa).

The interval 126–151 is disordered; it reads RGNADTPEGPRDTSPNSETSTSTTHS. Residues 138 to 151 show a composition bias toward low complexity; the sequence is TSPNSETSTSTTHS. LRR repeat units follow at residues 242–269, 272–299, 333–358, 390–417, 422–446, 453–475, 480–507, 510–536, 541–564, and 568–591; these read SGSL…VFGE, SCVL…QLLC, ASSL…ALYS, CSHL…AFKQ, AYTL…LLQG, LSDL…ALQE, VTCI…LGKN, LKHL…LVQL, DCSL…LINA, and NTCL…MLSK. 2 disordered regions span residues 864-902 and 970-1373; these read RTLS…TNID and LRHQ…PGTD. Pro residues predominate over residues 981-997; it reads PRTTPPGPGRPSVPVPG. Basic and acidic residues predominate over residues 1007–1022; that stretch reads RLDEGLEDFFSRRVMD. Positions 1047–1062 are enriched in basic residues; it reads QKRRRRGLFHFRRPRS. The segment covering 1078–1097 has biased composition (pro residues); sequence LPPPPPPPPTQESPPSPDPP. A compositionally biased stretch (low complexity) spans 1098-1108; it reads SLGNNSSPCWS. Residues 1218–1228 are compositionally biased toward basic and acidic residues; it reads RRAEATWHIAE. Residues 1232-1243 are compositionally biased toward polar residues; that stretch reads PNHSCQSPSPAS. The segment covering 1269–1278 has biased composition (pro residues); that stretch reads PIGPRPPKPV. Over residues 1345-1358 the composition is skewed to basic and acidic residues; that stretch reads QSCDKLEPDRRRPP.

The protein belongs to the CARMIL family. As to expression, widely expressed, with much higher levels in fetal tissues than in adult ones. Highly expressed in newborn brain.

The protein localises to the cytoplasm. It is found in the cell membrane. The chain is Capping protein, Arp2/3 and myosin-I linker protein 3 (Carmil3) from Rattus norvegicus (Rat).